A 160-amino-acid chain; its full sequence is MTEKHTLRLADPSAIDSIISVDEFLQIKEQYDAEQPLITLQTKFNLAWALVRSDSTQHVQQGLSLFCSIYKDSPERRLECLYYIALSHYKLKQYEESRRYLNMLLSKDPNSPEALKLKNRLYDAVTKEGYIGMVVVAGAVVSVAALVGWASKRLFSKRRP.

Over 1–129 the chain is Cytoplasmic; that stretch reads MTEKHTLRLA…RLYDAVTKEG (129 aa). A TPR repeat occupies 78-111; the sequence is LECLYYIALSHYKLKQYEESRRYLNMLLSKDPNS. The helical transmembrane segment at 130–150 threads the bilayer; the sequence is YIGMVVVAGAVVSVAALVGWA. Residues 151–160 are Mitochondrial intermembrane-facing; sequence SKRLFSKRRP.

The protein belongs to the FIS1 family.

Its subcellular location is the mitochondrion outer membrane. In terms of biological role, has a role in mitochondrial fission. Has a role in outer membrane fission but not matrix separation. The polypeptide is Mitochondrial fission 1 protein (fis1) (Schizosaccharomyces pombe (strain 972 / ATCC 24843) (Fission yeast)).